Reading from the N-terminus, the 487-residue chain is Arginine ADP-riboxanase OspC3 (487 aa).

Polar residues predominate over residues 1 to 14 (MRVETHSPSFTNPN). Positions 1-41 (MRVETHSPSFTNPNPAEACSGDPTEMGSRLSGVSRAPLPHA) are disordered. NAD(+) is bound by residues histidine 137, glutamine 138, serine 139, serine 164, asparagine 167, and threonine 168. Glutamate 325 is a catalytic residue. ANK repeat units follow at residues 368–398 (DAVTAMWHAINKGKDEVVAYLLGNWQFEAKD) and 444–473 (RGDTMLDNAVKYGNREMVAALIKHGADRNL).

Belongs to the OspC family.

It localises to the secreted. Its subcellular location is the host cytoplasm. It carries out the reaction L-arginyl-[protein] + NAD(+) = ADP-riboxanated L-argininyl-[protein] + nicotinamide + NH4(+) + H(+). ADP-riboxanase effector that inhibits host cell pyroptosis. Acts by mediating arginine ADP-riboxanation of host CASP4/CASP11, blocking CASP4/CASP11 autoprocessing. This prevents CASP4 activation and ability to recognize and cleave GSDMD, thereby inhibiting LPS-induced pyroptosis. ADP-riboxanation takes place in two steps: OspC3 first catalyzes ADP-ribosylation of target Arg, and then initiates a deamination to remove one N-omega group. The chain is Arginine ADP-riboxanase OspC3 from Chromobacterium sp. (strain ATCC 53434 / SC 14030).